We begin with the raw amino-acid sequence, 488 residues long: GTPase Der (488 aa).

EngA-type G domains lie at 3-166 (PVVA…AEAM) and 199-372 (IKLA…DSAT). GTP contacts are provided by residues 9 to 16 (GRPNVGKS), 56 to 60 (DTGGI), 118 to 121 (NKID), 205 to 212 (GKPNVGKS), 252 to 256 (DTAGV), and 317 to 320 (NKWD). The KH-like domain maps to 373 to 457 (RRVSTSMLTR…PIQLRFQEGD (85 aa)).

Belongs to the TRAFAC class TrmE-Era-EngA-EngB-Septin-like GTPase superfamily. EngA (Der) GTPase family. Associates with the 50S ribosomal subunit.

Its function is as follows. GTPase that plays an essential role in the late steps of ribosome biogenesis. The protein is GTPase Der of Shewanella sp. (strain MR-7).